The primary structure comprises 204 residues: Glycerol-3-phosphate acyltransferase (204 aa).

The next 5 membrane-spanning stretches (helical) occupy residues 6–26, 80–100, 122–142, 144–164, and 168–188; these read YIIIAVVAYLLGNISTSYIVA, LVGIDTLLAGYLAVICVVAGH, LAVNPVITLMCLAVFILVVAI, KYVSLGSVVGIGCSPIFMIMV, and AGLIVALFLTASVIYNHRANI.

It belongs to the PlsY family. As to quaternary structure, probably interacts with PlsX.

It localises to the cell membrane. The catalysed reaction is an acyl phosphate + sn-glycerol 3-phosphate = a 1-acyl-sn-glycero-3-phosphate + phosphate. The protein operates within lipid metabolism; phospholipid metabolism. Its function is as follows. Catalyzes the transfer of an acyl group from acyl-phosphate (acyl-PO(4)) to glycerol-3-phosphate (G3P) to form lysophosphatidic acid (LPA). This enzyme utilizes acyl-phosphate as fatty acyl donor, but not acyl-CoA or acyl-ACP. In Clostridioides difficile (strain 630) (Peptoclostridium difficile), this protein is Glycerol-3-phosphate acyltransferase.